The primary structure comprises 478 residues: Zinc finger C3HC-type protein 1-like (478 aa).

A C3HC-type zinc finger spans residues 93–147 (CAKYGWSNIECDMLKCSSCNAYLCASLQPVLDFSKYKQRCVELQEALRKAHEKFC). The interval 285–389 (LSAPNTPVSP…SSSSDTSPRG (105 aa)) is disordered. Residues 351 to 363 (SMGQGESSGLSNE) show a composition bias toward polar residues. A compositionally biased stretch (low complexity) spans 377 to 388 (LCSSSSSDTSPR).

Phosphorylated. May also be weakly phosphorylated on Tyr residues.

The protein localises to the nucleus. Its subcellular location is the nucleus envelope. In terms of biological role, required for proper positioning of a substantial amount of TPR at the nuclear basket (NB) through interaction with TPR. This is Zinc finger C3HC-type protein 1-like (zc3hc1) from Xenopus tropicalis (Western clawed frog).